We begin with the raw amino-acid sequence, 76 residues long: Short coiled-coil protein B (76 aa).

Residues 6-52 (ENQVELEEKTRLINQVLELQNTLEDLSARVDAVKEENLKLKSENQVL) adopt a coiled-coil conformation.

This sequence belongs to the SCOC family.

It localises to the golgi apparatus membrane. It is found in the golgi apparatus. Its subcellular location is the trans-Golgi network. The protein resides in the cytoplasm. The protein localises to the cytosol. Its function is as follows. Positive regulator of amino acid starvation-induced autophagy. The polypeptide is Short coiled-coil protein B (scocb) (Danio rerio (Zebrafish)).